Consider the following 317-residue polypeptide: Low affinity immunoglobulin gamma Fc region receptor II-a (317 aa).

The signal sequence occupies residues 1–33 (MTMETQMSQNVCPRNLWLLQPLTVLLLLASADS). Residues 34-217 (QAAAPPKAVL…PSMGSSSPMG (184 aa)) lie on the Extracellular side of the membrane. Ig-like C2-type domains are found at residues 39–118 (PKAV…VHLT) and 122–204 (EWLV…VTIT). 2 disulfides stabilise this stretch: C62–C104 and C143–C187. N97 and N178 each carry an N-linked (GlcNAc...) asparagine glycan. A helical membrane pass occupies residues 218 to 240 (IIVAVVIATAVAAIVAAVVALIY). Topologically, residues 241 to 317 (CRKKRISANS…PPNDHVNSNN (77 aa)) are cytoplasmic. Phosphotyrosine; by SRC-type Tyr-kinases is present on residues Y288 and Y304. Residues 292–317 (NPRAPTDDDKNIYLTLPPNDHVNSNN) are disordered.

In terms of assembly, interacts with IGHG1. Interacts with INPP5D/SHIP1 and INPPL1/SHIP2, regulating its function. Interacts with APCS and FGR. Interacts with HCK. In terms of processing, phosphorylated by SRC-type Tyr-kinases such as LYN, BLK, FYN, HCK and SYK. Found on monocytes, neutrophils and eosinophil platelets.

The protein resides in the cell membrane. Its function is as follows. Binds to the Fc region of immunoglobulins gamma. Low affinity receptor. By binding to IgG it initiates cellular responses against pathogens and soluble antigens. Promotes phagocytosis of opsonized antigens. The polypeptide is Low affinity immunoglobulin gamma Fc region receptor II-a (FCGR2A) (Homo sapiens (Human)).